A 260-amino-acid chain; its full sequence is Large ribosomal subunit protein uL2y (260 aa).

Positions 227-248 (RRDKSAGAKVGQIAARRTGRRR) are disordered.

Belongs to the universal ribosomal protein uL2 family.

The protein is Large ribosomal subunit protein uL2y (RPL8B) of Arabidopsis thaliana (Mouse-ear cress).